A 104-amino-acid chain; its full sequence is Large ribosomal subunit protein bL27 (104 aa).

Residues 1–15 (MNNKYFLTKIDLQFF) constitute a propeptide that is removed on maturation.

It belongs to the bacterial ribosomal protein bL27 family. Post-translationally, the N-terminus is cleaved by ribosomal processing cysteine protease Prp.

The protein is Large ribosomal subunit protein bL27 of Mycoplasma pneumoniae (strain ATCC 29342 / M129 / Subtype 1) (Mycoplasmoides pneumoniae).